A 147-amino-acid chain; its full sequence is MERVNNYKLCVALLIISMVMAMAAAQSATNVRSTYHLYNPQNINWDLRAASAFCATWDADKPLAWRQKYGWTAFCGPAGPRGQDSCGRCLRVTNTGTGTQTTVRIVDQCSNGGLDLDVNVFNQLDTNGVGYQQGHLTVNYEFVNCND.

Residues 1–25 (MERVNNYKLCVALLIISMVMAMAAA) form the signal peptide. In terms of domain architecture, Barwin spans 26–147 (QSATNVRSTY…VNYEFVNCND (122 aa)). 3 disulfides stabilise this stretch: C54–C86, C75–C109, and C89–C145.

It localises to the secreted. Its subcellular location is the cell wall. The protein is Pathogenesis-related protein PR-4A of Nicotiana tabacum (Common tobacco).